The chain runs to 387 residues: Phosphoglycerate kinase (387 aa).

Residues 21 to 23 (DLN), arginine 36, 59 to 62 (HLGR), arginine 113, and arginine 146 contribute to the substrate site. ATP-binding positions include lysine 197, glutamate 314, and 340–343 (GGDT).

This sequence belongs to the phosphoglycerate kinase family. Monomer.

Its subcellular location is the cytoplasm. It catalyses the reaction (2R)-3-phosphoglycerate + ATP = (2R)-3-phospho-glyceroyl phosphate + ADP. It participates in carbohydrate degradation; glycolysis; pyruvate from D-glyceraldehyde 3-phosphate: step 2/5. This chain is Phosphoglycerate kinase, found in Aliivibrio salmonicida (strain LFI1238) (Vibrio salmonicida (strain LFI1238)).